A 150-amino-acid chain; its full sequence is UPF0178 protein Bpet3884 (150 aa).

This sequence belongs to the UPF0178 family.

This is UPF0178 protein Bpet3884 from Bordetella petrii (strain ATCC BAA-461 / DSM 12804 / CCUG 43448).